The sequence spans 957 residues: Glycine dehydrogenase (decarboxylating) (957 aa).

Lys-708 carries the N6-(pyridoxal phosphate)lysine modification.

It belongs to the GcvP family. The glycine cleavage system is composed of four proteins: P, T, L and H. Requires pyridoxal 5'-phosphate as cofactor.

It carries out the reaction N(6)-[(R)-lipoyl]-L-lysyl-[glycine-cleavage complex H protein] + glycine + H(+) = N(6)-[(R)-S(8)-aminomethyldihydrolipoyl]-L-lysyl-[glycine-cleavage complex H protein] + CO2. Functionally, the glycine cleavage system catalyzes the degradation of glycine. The P protein binds the alpha-amino group of glycine through its pyridoxal phosphate cofactor; CO(2) is released and the remaining methylamine moiety is then transferred to the lipoamide cofactor of the H protein. The protein is Glycine dehydrogenase (decarboxylating) of Escherichia coli O7:K1 (strain IAI39 / ExPEC).